Here is a 560-residue protein sequence, read N- to C-terminus: CPTPDAPQYACCLHGMPTFRESNPNPATRAVSTPNKLFDFKSLGYNYDNLDFHGMDTAHLEAAIKKQKQKDRVFAGFLLHGIKTSADVHLKVCNAADCHEAGVVFVLGARTEMPWHFDRNYKMDITDVLHEMHIPMEALFENDSKIHLEVEIQSVDGAILDSHSLPTPSLIYAPAKGLVSQHIEDHDTETLIRKNVNSLSPSEIKNLRDALVAVQADKSGNGYQKIASYHGMPLSCHYPNGTAFACCQHGMVTFPHWHRLYMKQMEDAMKAKGAKIGIPYWDWTTTFSHLPFLVTEPKNNPFHHGYIDVADTKTTRNPRPQLFDDPEQGDQSFFYRQIAFALEQRDFCDFEIQFEMGHNAIHSWVGGSSPYGMSTLHYTSYDPLFYLHHSNTDRIWAIWQALQKYRGLPYNSANCEINKLKKPMMPFSSDDNPNEVTKAHSTGTKHLNKIQEKDRVFAGFLLRAIGQSADVNFDICRKDGECKFGGTFCVLGGQHEMAWAFDRLFLYDISRTLLQLRLDAHDDFDVKVTIMGIDGKSLPTTLLPPPTILFKPGTGTQLTR.

Residues cysteine 1 and cysteine 11 are joined by a disulfide bond. The tract at residues 1-184 is unit G; that stretch reads CPTPDAPQYA…AKGLVSQHIE (184 aa). A cross-link (2'-(S-cysteinyl)-histidine (Cys-His)) is located at residues 12 to 14; it reads CLH. Cysteine 93 and cysteine 98 are disulfide-bonded. The N-linked (GlcNAc...) asparagine glycan is linked to asparagine 142. Residues 185–560 form a unit H region; it reads DHDTETLIRK…KPGTGTQLTR (376 aa). Histidine 230 contacts Cu cation. Cysteine 236 and cysteine 246 are disulfide-bonded. An N-linked (GlcNAc...) asparagine glycan is attached at asparagine 240. A cross-link (2'-(S-cysteinyl)-histidine (Cys-His)) is located at residues 247–249; that stretch reads CQH. Residues histidine 249, histidine 258, histidine 358, histidine 362, and histidine 389 each contribute to the Cu cation site. Cystine bridges form between cysteine 348–cysteine 415 and cysteine 476–cysteine 482.

This sequence belongs to the tyrosinase family. Hemocyanin subfamily. In terms of assembly, decamers of large identical subunits (390 kDa), each containing 8 globular oxygen-binding functional units. It depends on Cu(2+) as a cofactor.

In terms of biological role, hemocyanins are copper-containing oxygen carriers occurring freely dissolved in the hemolymph of many mollusks and arthropods. This Sepia officinalis (Common cuttlefish) protein is Hemocyanin, units G and H.